A 386-amino-acid chain; its full sequence is Methionine aminopeptidase 1 (386 aa).

Ala2 is modified (N-acetylalanine). Residues Thr6 to Lys59 form a C6H2-type zinc finger. Zn(2+)-binding residues include Cys9, Cys14, Cys22, Cys25, Cys36, Cys40, His48, and His52. His203 contacts a protein. Zn(2+) contacts are provided by Asp220, Asp231, and His294. His301 lines the a protein pocket. Residues Glu327 and Glu358 each coordinate Zn(2+).

It belongs to the peptidase M24A family. Methionine aminopeptidase type 1 subfamily. As to quaternary structure, associates with the 60S ribosomal subunit of the 80S translational complex. It depends on Zn(2+) as a cofactor. Co(2+) is required as a cofactor. Requires Mn(2+) as cofactor. Fe(2+) serves as cofactor.

It localises to the cytoplasm. The enzyme catalyses Release of N-terminal amino acids, preferentially methionine, from peptides and arylamides.. In terms of biological role, cotranslationally removes the N-terminal methionine from nascent proteins. The N-terminal methionine is often cleaved when the second residue in the primary sequence is small and uncharged (Met-Ala-, Cys, Gly, Pro, Ser, Thr, or Val). Required for normal progression through the cell cycle. This chain is Methionine aminopeptidase 1 (METAP1), found in Homo sapiens (Human).